Consider the following 113-residue polypeptide: Hydrogenase maturation factor HypA (113 aa).

H2 serves as a coordination point for Ni(2+). Zn(2+) contacts are provided by C73, C76, C89, and C92.

Belongs to the HypA/HybF family.

Functionally, involved in the maturation of [NiFe] hydrogenases. Required for nickel insertion into the metal center of the hydrogenase. This Alkalilimnicola ehrlichii (strain ATCC BAA-1101 / DSM 17681 / MLHE-1) protein is Hydrogenase maturation factor HypA.